The sequence spans 1026 residues: Chromodomain-helicase-DNA-binding protein 1-like (1026 aa).

A Helicase ATP-binding domain is found at Ser-47–Ser-212. Asp-60–Thr-67 is an ATP binding site. Positions Asp-163–His-166 match the DEAH box motif. Positions Leu-340–Ala-494 constitute a Helicase C-terminal domain. Residues Leu-540–Ala-668 adopt a coiled-coil conformation. The interval Ala-594–Leu-628 is regulatory linker segment (RLS). Residues Leu-606 to Lys-655 are disordered. Residues Asn-608–Lys-666 are required for ATPase activity. One can recognise a Macro domain in the interval His-697–Arg-870. The span at Val-877–Ala-907 shows a compositional bias: low complexity. A disordered region spans residues Val-877 to Pro-929. The region spanning Gly-930–Ile-1023 is the BRCT domain.

This sequence belongs to the SNF2/RAD54 helicase family. Interacts with nucleosomes; interacts with the acidic patch of histones.

The protein resides in the nucleus. Its subcellular location is the chromosome. The enzyme catalyses ATP + H2O = ADP + phosphate + H(+). With respect to regulation, adopts an inactive conformation in absence of DNA damage. Binding to poly-ADP-ribosylated histones activates the ATP-dependent chromatin remodeler activity. Its function is as follows. ATP-dependent chromatin remodeler that mediates chromatin-remodeling following DNA damage. Recruited to DNA damage sites through interaction with poly-ADP-ribose: specifically recognizes and binds histones that are poly-ADP-ribosylated on serine residues in response to DNA damage. Poly-ADP-ribose-binding activates the ATP-dependent chromatin remodeler activity, thereby regulating chromatin during DNA repair. Catalyzes nucleosome sliding away from DNA breaks in an ATP-dependent manner. The sequence is that of Chromodomain-helicase-DNA-binding protein 1-like (chd1l) from Danio rerio (Zebrafish).